A 357-amino-acid chain; its full sequence is Ribosomal RNA large subunit methyltransferase M (357 aa).

Residues serine 183, 216–219, aspartate 235, aspartate 255, and aspartate 271 contribute to the S-adenosyl-L-methionine site; that span reads APGG. Residue lysine 300 is the Proton acceptor of the active site.

The protein belongs to the class I-like SAM-binding methyltransferase superfamily. RNA methyltransferase RlmE family. RlmM subfamily. Monomer.

The protein resides in the cytoplasm. It catalyses the reaction cytidine(2498) in 23S rRNA + S-adenosyl-L-methionine = 2'-O-methylcytidine(2498) in 23S rRNA + S-adenosyl-L-homocysteine + H(+). Its function is as follows. Catalyzes the 2'-O-methylation at nucleotide C2498 in 23S rRNA. The polypeptide is Ribosomal RNA large subunit methyltransferase M (Pseudomonas syringae pv. syringae (strain B728a)).